The sequence spans 319 residues: Probable NAD(P)H-dependent D-xylose reductase xyl1 (319 aa).

Tyr50 (proton donor) is an active-site residue. His112 lines the substrate pocket. NAD(+) is bound by residues 166-167, 215-224, and 271-281; these read SN, SSFGPLSFLE, and KSNNPTRLSQN.

This sequence belongs to the aldo/keto reductase family.

It carries out the reaction xylitol + NAD(+) = D-xylose + NADH + H(+). It catalyses the reaction xylitol + NADP(+) = D-xylose + NADPH + H(+). Its pathway is carbohydrate metabolism; D-xylose degradation. In terms of biological role, catalyzes the initial reaction in the xylose utilization pathway by reducing D-xylose into xylitol. Xylose is a major component of hemicelluloses such as xylan. Most fungi utilize D-xylose via three enzymatic reactions, xylose reductase (XR), xylitol dehydrogenase (XDH), and xylulokinase, to form xylulose 5-phosphate, which enters pentose phosphate pathway. This chain is Probable NAD(P)H-dependent D-xylose reductase xyl1 (xyl1), found in Aspergillus oryzae (strain ATCC 42149 / RIB 40) (Yellow koji mold).